The primary structure comprises 163 residues: Inorganic pyrophosphatase (163 aa).

3 residues coordinate substrate: K21, R35, and Y47. Mg(2+) contacts are provided by D57, D62, and D94. Y131 contacts substrate.

The protein belongs to the PPase family. Homohexamer. It depends on Mg(2+) as a cofactor.

Its subcellular location is the cytoplasm. The catalysed reaction is diphosphate + H2O = 2 phosphate + H(+). Its function is as follows. Catalyzes the hydrolysis of inorganic pyrophosphate (PPi) forming two phosphate ions. This Halalkalibacterium halodurans (strain ATCC BAA-125 / DSM 18197 / FERM 7344 / JCM 9153 / C-125) (Bacillus halodurans) protein is Inorganic pyrophosphatase.